The following is a 78-amino-acid chain: Molt-inhibiting hormone (78 aa).

Disulfide bonds link Cys-7–Cys-44, Cys-24–Cys-40, and Cys-27–Cys-53.

It is found in the secreted. Inhibits Y-organs where molting hormone (ecdysteroid) is secreted. A molting cycle is initiated when MIH secretion diminishes or stops. Also has significant hyperglycemic hormone (CHH) activity. This chain is Molt-inhibiting hormone, found in Cancer pagurus (Rock crab).